The chain runs to 203 residues: Enterotoxin-like toxin X (203 aa).

This sequence belongs to the staphylococcal/streptococcal toxin family.

It is found in the secreted. Its function is as follows. Plays a role in the inhibition of the host innate immune system. Inhibits phagocytosis and killing by human neutrophils by interacting with multiple neutrophil surface glycoproteins in a sialic acid-dependent manner. This Staphylococcus aureus (strain NCTC 8325 / PS 47) protein is Enterotoxin-like toxin X.